An 865-amino-acid chain; its full sequence is Alanine--tRNA ligase (865 aa).

The Zn(2+) site is built by H554, H558, C656, and H660.

This sequence belongs to the class-II aminoacyl-tRNA synthetase family. The cofactor is Zn(2+).

Its subcellular location is the cytoplasm. The enzyme catalyses tRNA(Ala) + L-alanine + ATP = L-alanyl-tRNA(Ala) + AMP + diphosphate. Functionally, catalyzes the attachment of alanine to tRNA(Ala) in a two-step reaction: alanine is first activated by ATP to form Ala-AMP and then transferred to the acceptor end of tRNA(Ala). Also edits incorrectly charged Ser-tRNA(Ala) and Gly-tRNA(Ala) via its editing domain. The protein is Alanine--tRNA ligase of Francisella tularensis subsp. holarctica (strain LVS).